Here is a 346-residue protein sequence, read N- to C-terminus: Biotin synthase (346 aa).

The region spanning 36–265 (YFGRQVMLHR…KAEIRIGGGR (230 aa)) is the Radical SAM core domain. The [4Fe-4S] cluster site is built by C54, C58, and C61. Residues C98, C130, C190, and R260 each coordinate [2Fe-2S] cluster.

It belongs to the radical SAM superfamily. Biotin synthase family. In terms of assembly, homodimer. [4Fe-4S] cluster is required as a cofactor. The cofactor is [2Fe-2S] cluster.

The enzyme catalyses (4R,5S)-dethiobiotin + (sulfur carrier)-SH + 2 reduced [2Fe-2S]-[ferredoxin] + 2 S-adenosyl-L-methionine = (sulfur carrier)-H + biotin + 2 5'-deoxyadenosine + 2 L-methionine + 2 oxidized [2Fe-2S]-[ferredoxin]. The protein operates within cofactor biosynthesis; biotin biosynthesis; biotin from 7,8-diaminononanoate: step 2/2. Its function is as follows. Catalyzes the conversion of dethiobiotin (DTB) to biotin by the insertion of a sulfur atom into dethiobiotin via a radical-based mechanism. The sequence is that of Biotin synthase from Acaryochloris marina (strain MBIC 11017).